We begin with the raw amino-acid sequence, 312 residues long: Methionyl-tRNA formyltransferase (312 aa).

109 to 112 provides a ligand contact to (6S)-5,6,7,8-tetrahydrofolate; that stretch reads SLLP.

It belongs to the Fmt family.

The enzyme catalyses L-methionyl-tRNA(fMet) + (6R)-10-formyltetrahydrofolate = N-formyl-L-methionyl-tRNA(fMet) + (6S)-5,6,7,8-tetrahydrofolate + H(+). Its function is as follows. Attaches a formyl group to the free amino group of methionyl-tRNA(fMet). The formyl group appears to play a dual role in the initiator identity of N-formylmethionyl-tRNA by promoting its recognition by IF2 and preventing the misappropriation of this tRNA by the elongation apparatus. This chain is Methionyl-tRNA formyltransferase, found in Listeria innocua serovar 6a (strain ATCC BAA-680 / CLIP 11262).